Reading from the N-terminus, the 88-residue chain is Small ribosomal subunit protein bS20 (88 aa).

This sequence belongs to the bacterial ribosomal protein bS20 family.

Its function is as follows. Binds directly to 16S ribosomal RNA. This Aromatoleum aromaticum (strain DSM 19018 / LMG 30748 / EbN1) (Azoarcus sp. (strain EbN1)) protein is Small ribosomal subunit protein bS20.